The sequence spans 764 residues: Plasma membrane fusion protein prm-1 (764 aa).

The Extracellular portion of the chain corresponds to 1–61; the sequence is MVYNEKNGGG…YLGLRARLSQ (61 aa). Residues 62 to 82 form a helical membrane-spanning segment; the sequence is LWFNRWTILLILVLIRVIILT. Topologically, residues 83–149 are cytoplasmic; it reads ANLKENLGDA…LKMILTGVQA (67 aa). Residues 150–170 form a helical membrane-spanning segment; it reads IIMFVINMYIGTFACLVAAFI. Topologically, residues 171–334 are extracellular; the sequence is HGGLHVATAV…SLITLVYKAK (164 aa). 2 N-linked (GlcNAc...) asparagine glycosylation sites follow: N271 and N315. A helical membrane pass occupies residues 335-355; it reads IAFLVVIIILALLAIFVMGYI. At 356-424 the chain is on the cytoplasmic side; sequence EYRGFKRERE…AFAYATSLPA (69 aa). A helical membrane pass occupies residues 425 to 445; it reads LFVLSLAVAGMLSCLFQWVLL. The Extracellular portion of the chain corresponds to 446–624; that stretch reads RQIEKKAPEL…NGVIQEALIT (179 aa). N-linked (GlcNAc...) asparagine glycosylation is found at N479, N508, and N527. Residues 625-645 traverse the membrane as a helical segment; it reads LGLFLTYVIVVLIGVMGALIG. The Cytoplasmic segment spans residues 646–764; the sequence is WATPGKTRGE…EKVPGYFTPI (119 aa). Disordered stretches follow at residues 653–701 and 735–754; these read RGEG…GGGG and HQRTSSYPTVESPDPMPHGD.

The protein belongs to the PRM1 family.

The protein resides in the cell membrane. Its function is as follows. Involved in cell fusion during mating by stabilizing the plasma membrane fusion event. The sequence is that of Plasma membrane fusion protein prm-1 (prm-1) from Neurospora crassa (strain ATCC 24698 / 74-OR23-1A / CBS 708.71 / DSM 1257 / FGSC 987).